Reading from the N-terminus, the 276-residue chain is Undecaprenyl-diphosphatase 2 (276 aa).

Transmembrane regions (helical) follow at residues 4–24 (IEAL…VSSL), 44–64 (DFLP…LIYF), 87–107 (ARLM…GLLL), 114–134 (LFAS…LLLW), 150–170 (LSFA…LPGF), 193–213 (FSFL…IPKL), 225–245 (LLLA…WFLM), and 256–276 (LRPF…FKLV).

Belongs to the UppP family.

The protein localises to the cell inner membrane. The catalysed reaction is di-trans,octa-cis-undecaprenyl diphosphate + H2O = di-trans,octa-cis-undecaprenyl phosphate + phosphate + H(+). Catalyzes the dephosphorylation of undecaprenyl diphosphate (UPP). Confers resistance to bacitracin. This chain is Undecaprenyl-diphosphatase 2, found in Chromobacterium violaceum (strain ATCC 12472 / DSM 30191 / JCM 1249 / CCUG 213 / NBRC 12614 / NCIMB 9131 / NCTC 9757 / MK).